Consider the following 148-residue polypeptide: Deoxyuridine 5'-triphosphate nucleotidohydrolase (148 aa).

Residues 68–70 (RSG), Asn-81, and 85–87 (TID) contribute to the substrate site.

The protein belongs to the dUTPase family. The cofactor is Mg(2+).

The enzyme catalyses dUTP + H2O = dUMP + diphosphate + H(+). It functions in the pathway pyrimidine metabolism; dUMP biosynthesis; dUMP from dCTP (dUTP route): step 2/2. In terms of biological role, this enzyme is involved in nucleotide metabolism: it produces dUMP, the immediate precursor of thymidine nucleotides and it decreases the intracellular concentration of dUTP so that uracil cannot be incorporated into DNA. The protein is Deoxyuridine 5'-triphosphate nucleotidohydrolase of Geobacter metallireducens (strain ATCC 53774 / DSM 7210 / GS-15).